The chain runs to 240 residues: MNESERKIVEEFQKETGINFKNEELLFRALCHSSYANEQNQAGRKDVESNEKLEFLGDAVLELFVCEILYKKYPEAEVGDLARVKSAAASEEVLAMVSRKMNLGKFLFLGKGEEKTGGRDRDSILADAFEALLAAIYLDQGYEKIKELFEQEFEFYIEKIMKGEMLFDYKTALQEIVQSEHKVPPEYILVRTEKNDGDRIFVVEVRVNGKTIATGKGRTKKEAEKEAARIAYEKLLKERS.

The RNase III domain maps to 9-141 (VEEFQKETGI…LLAAIYLDQG (133 aa)). Mg(2+) is bound at residue glutamate 54. Aspartate 58 is an active-site residue. Mg(2+) is bound by residues aspartate 127 and glutamate 130. The active site involves glutamate 130. Residues 168–237 (DYKTALQEIV…ARIAYEKLLK (70 aa)) form the DRBM domain.

Belongs to the ribonuclease III family. Homodimer. The cofactor is Mg(2+).

The protein resides in the cytoplasm. It carries out the reaction Endonucleolytic cleavage to 5'-phosphomonoester.. Digests double-stranded RNA. Involved in the processing of primary rRNA transcript to yield the immediate precursors to the large and small rRNAs (23S and 16S). Also processes some mRNAs, and tRNAs when they are encoded in the rRNA operon. Probably processes pre-crRNA and tracrRNA of type II CRISPR loci if present in the organism. The protein is Ribonuclease 3 (rnc) of Thermotoga maritima (strain ATCC 43589 / DSM 3109 / JCM 10099 / NBRC 100826 / MSB8).